A 3103-amino-acid polypeptide reads, in one-letter code: Extracellular matrix protein 3 (3103 aa).

A signal peptide spans methionine 1–alanine 19. The Extracellular segment spans residues glutamine 20–asparagine 3047. 12 CSPG repeats span residues proline 289–valine 388, alanine 411–threonine 499, alanine 520–valine 630, proline 656–glutamine 762, glutamine 784–threonine 875, leucine 901–serine 993, alanine 1022–threonine 1124, glutamate 1145–threonine 1238, threonine 1259–threonine 1357, valine 1378–threonine 1470, lysine 1490–threonine 1579, and alanine 1613–arginine 1710. 2 N-linked (GlcNAc...) asparagine glycosylation sites follow: asparagine 330 and asparagine 453. 7 N-linked (GlcNAc...) asparagine glycosylation sites follow: asparagine 989, asparagine 1024, asparagine 1042, asparagine 1207, asparagine 1294, asparagine 1321, and asparagine 1327. N-linked (GlcNAc...) asparagine glycosylation is found at asparagine 1542, asparagine 1674, asparagine 1679, asparagine 1725, and asparagine 1739. Calx-beta domains are found at residues leucine 1717 to histidine 1816, alanine 1829 to serine 1942, asparagine 1956 to asparagine 2062, and isoleucine 2077 to glycine 2179. N-linked (GlcNAc...) asparagine glycosylation is found at asparagine 2080, asparagine 2195, asparagine 2274, asparagine 2385, and asparagine 2932. Positions threonine 2197–threonine 2302 constitute a Calx-beta 5 domain. The disordered stretch occupies residues serine 2983–alanine 3013. Residues valine 3048 to isoleucine 3068 traverse the membrane as a helical segment. Residues glycine 3069–valine 3103 are Cytoplasmic-facing.

Belongs to the FRAS1 family. Component of extracellular matrix fibers that interact with PMC filopodia during gastrulation (at protein level).

The protein resides in the cell membrane. Its function is as follows. Extracellular matrix protein that may serve as substrate for the migratory primary mesenchyme cells (PMCs), the interaction possibly providing guidance information to migrating PMCs. The chain is Extracellular matrix protein 3 (ECM3) from Lytechinus variegatus (Green sea urchin).